Here is a 100-residue protein sequence, read N- to C-terminus: Aspartyl/glutamyl-tRNA(Asn/Gln) amidotransferase subunit C (100 aa).

This sequence belongs to the GatC family. Heterotrimer of A, B and C subunits.

The enzyme catalyses L-glutamyl-tRNA(Gln) + L-glutamine + ATP + H2O = L-glutaminyl-tRNA(Gln) + L-glutamate + ADP + phosphate + H(+). It catalyses the reaction L-aspartyl-tRNA(Asn) + L-glutamine + ATP + H2O = L-asparaginyl-tRNA(Asn) + L-glutamate + ADP + phosphate + 2 H(+). Allows the formation of correctly charged Asn-tRNA(Asn) or Gln-tRNA(Gln) through the transamidation of misacylated Asp-tRNA(Asn) or Glu-tRNA(Gln) in organisms which lack either or both of asparaginyl-tRNA or glutaminyl-tRNA synthetases. The reaction takes place in the presence of glutamine and ATP through an activated phospho-Asp-tRNA(Asn) or phospho-Glu-tRNA(Gln). The polypeptide is Aspartyl/glutamyl-tRNA(Asn/Gln) amidotransferase subunit C (Streptococcus equi subsp. zooepidemicus (strain H70)).